The following is a 480-amino-acid chain: UDP-glucose 6-dehydrogenase 5 (480 aa).

Residues 8–13 (GAGYVG), D33, R38, 86–90 (VNTPT), 127–128 (ST), and E161 each bind NAD(+). Residues 157–161 (EFLAE), 216–223 (KLAANAFL), and 256–269 (RIGP…VGFG) each bind substrate. The active-site Nucleophile is C272. 272–275 (CFQK) lines the NAD(+) pocket. A substrate-binding site is contributed by 334–335 (FK). An NAD(+)-binding site is contributed by R342. A Phosphoserine modification is found at S393. R447 lines the substrate pocket.

The protein belongs to the UDP-glucose/GDP-mannose dehydrogenase family.

The enzyme catalyses UDP-alpha-D-glucose + 2 NAD(+) + H2O = UDP-alpha-D-glucuronate + 2 NADH + 3 H(+). The protein operates within nucleotide-sugar biosynthesis; UDP-alpha-D-glucuronate biosynthesis; UDP-alpha-D-glucuronate from UDP-alpha-D-glucose: step 1/1. In terms of biological role, involved in the biosynthesis of UDP-glucuronic acid (UDP-GlcA), providing nucleotide sugars for cell-wall polymers. The polypeptide is UDP-glucose 6-dehydrogenase 5 (UGD5) (Oryza sativa subsp. japonica (Rice)).